A 498-amino-acid chain; its full sequence is PE-PGRS family protein PE_PGRS33 (498 aa).

The tract at residues 1-30 is essential for translocation to the cell surface; that stretch reads MSFVVTIPEALAAVATDLAGIGSTIGTANA. A PE domain is found at 1 to 93; sequence MSFVVTIPEA…AGSYAAAEAA (93 aa). The tract at residues 140–260 is interacts with TLR2; that stretch reads GNGGAGGSGA…GLFFGVGGAG (121 aa).

Belongs to the mycobacterial PE family. PGRS subfamily. Interacts with human TLR2.

The protein resides in the secreted. The protein localises to the cell wall. Its subcellular location is the cell surface. It localises to the cell outer membrane. Its activity is regulated as follows. Binding of Ca(2+) to PE_PGRS33 induces conformational changes and increases affinity for TLR2. Functionally, induces TNF-alpha release through human Toll-like receptor 2 (TLR2) signaling pathway, leading to macrophage apoptosis. The signaling pathway involves TLR2-dependent activation of the mitogen-activated protein kinase kinase kinase 5 (ASK1), which activates the p38 and JNK MAPKs, leading to enhanced expression of TNF-alpha and tumor necrosis factor receptor superfamily member 1A (TNFRI) genes. Signals are amplified through classical caspase 8-dependent mitochondrial release of cytochrome c, leading to the activation of caspases 9 and 3. Mediates Ca(2+)-dependent up-regulation of the anti-inflammatory cytokine IL-10. Mediates entry into macrophages in a TLR2-dependent mechanism and activates the TLR2-dependent pro-adhesive pathway. The protein is PE-PGRS family protein PE_PGRS33 of Mycobacterium tuberculosis (strain ATCC 25618 / H37Rv).